The primary structure comprises 712 residues: Polyribonucleotide nucleotidyltransferase (712 aa).

The Mg(2+) site is built by Asp485 and Asp491. Positions 552–615 (PRIHTIKINP…EAIRRIEAIT (64 aa)) constitute a KH domain. An S1 motif domain is found at 621 to 689 (NRIYEGKVVR…RQGRVRLSIK (69 aa)).

It belongs to the polyribonucleotide nucleotidyltransferase family. In terms of assembly, component of the RNA degradosome, which is a multiprotein complex involved in RNA processing and mRNA degradation. Mg(2+) serves as cofactor.

The protein localises to the cytoplasm. The catalysed reaction is RNA(n+1) + phosphate = RNA(n) + a ribonucleoside 5'-diphosphate. In terms of biological role, involved in mRNA degradation. Catalyzes the phosphorolysis of single-stranded polyribonucleotides processively in the 3'- to 5'-direction. The protein is Polyribonucleotide nucleotidyltransferase of Aeromonas hydrophila subsp. hydrophila (strain ATCC 7966 / DSM 30187 / BCRC 13018 / CCUG 14551 / JCM 1027 / KCTC 2358 / NCIMB 9240 / NCTC 8049).